Here is a 297-residue protein sequence, read N- to C-terminus: uncharacterized protein (297 aa).

Disordered regions lie at residues 12-43 (QNNNNNTNNNNNNNNPKASILKNNNNDNTNDN), 65-85 (VPNSINVNTSSSGNKNGDKPI), 122-151 (KVSTTTTTTSSTSKPILPQTITKPNKTNET), and 265-297 (SRLSSNNNNNNNNNNNNNNNNSNLLFFFDDQNN). A compositionally biased stretch (polar residues) spans 65–79 (VPNSINVNTSSSGNK). Over residues 122 to 135 (KVSTTTTTTSSTSK) the composition is skewed to low complexity. Positions 140–151 (QTITKPNKTNET) are enriched in polar residues. Over residues 268–287 (SSNNNNNNNNNNNNNNNNSN) the composition is skewed to low complexity.

This is an uncharacterized protein from Dictyostelium discoideum (Social amoeba).